The chain runs to 171 residues: Calcium channel flower homolog (171 aa).

At 1–31 (MSGSVAAGAAAGPVPPAQEEGMTWWYRWLCR) the chain is on the cytoplasmic side. A helical membrane pass occupies residues 32-52 (LAGVLGAVSCAISGLFNCVTI). Residues 53–56 (HPLN) lie on the Extracellular side of the membrane. Residues 57 to 77 (IAAGVWMIMNAFILLLCEAPF) form a helical membrane-spanning segment. Residues 78 to 101 (CCQFVEFANTVAEKVDRLRSWQKA) are Cytoplasmic-facing. Residues 102–122 (VFYCGMAIVPIVMSLTLTTLL) form a helical membrane-spanning segment. Topologically, residues 123-124 (GN) are extracellular. Residues 125 to 141 (AIAFATGVLYGLSALGK) form a helical membrane-spanning segment. Residues 142-171 (KGDAISYARIQQQRQQADEEKLAETFEGEL) are Cytoplasmic-facing.

Belongs to the calcium channel flower family. Interacts with adaptor protein complex 2 (AP-2). In terms of tissue distribution, expressed in calyces in the brain (at protein level). Detected in cultured hippocampal neurons (at protein level).

The protein localises to the cell membrane. Its subcellular location is the cytoplasmic vesicle. It localises to the secretory vesicle. The protein resides in the synaptic vesicle. It is found in the golgi apparatus. The protein localises to the vesicle. In terms of biological role, transmembrane protein which mediates synaptic endocytosis and fitness-based cell culling. In response to different stimulus strengths, controls two major modes of synaptic vesicle (SV) retrieval in hippocampal neurons; Clathrin-mediated endocytosis (CME) in response to mild stimulation and activity-dependent bulk endocytosis (ADBE) in response to strong stimulation. In cytotoxic T-lymphoocytes (CTLs) facilitates calcium-dependent endocytosis of cytotoxic granules (CGs) at the immuno synapse. Different isoforms work as fitness fingerprints in 'loser' and 'winner' cells and thereby mediate win/lose decisions as part of the cell competition process. The chain is Calcium channel flower homolog (Cacfd1) from Rattus norvegicus (Rat).